A 138-amino-acid chain; its full sequence is Nucleoside diphosphate kinase (138 aa).

ATP-binding residues include Lys9, Phe57, Arg85, Thr91, Arg102, and Asn112. Catalysis depends on His120, which acts as the Pros-phosphohistidine intermediate.

It belongs to the NDK family. In terms of assembly, homotetramer. Requires Mg(2+) as cofactor.

Its subcellular location is the cytoplasm. The enzyme catalyses a 2'-deoxyribonucleoside 5'-diphosphate + ATP = a 2'-deoxyribonucleoside 5'-triphosphate + ADP. It carries out the reaction a ribonucleoside 5'-diphosphate + ATP = a ribonucleoside 5'-triphosphate + ADP. In terms of biological role, major role in the synthesis of nucleoside triphosphates other than ATP. The ATP gamma phosphate is transferred to the NDP beta phosphate via a ping-pong mechanism, using a phosphorylated active-site intermediate. The chain is Nucleoside diphosphate kinase from Streptococcus agalactiae serotype III (strain NEM316).